The sequence spans 209 residues: Nascent polypeptide-associated complex subunit alpha (209 aa).

Basic and acidic residues predominate over residues M1–E21. 2 disordered regions span residues M1–N51 and Q121–I175. Acidic residues predominate over residues H22 to G36. An NAC-A/B domain is found at N49 to A114. The span at A127–D150 shows a compositional bias: basic and acidic residues. Residues K151–D166 show a composition bias toward acidic residues. The UBA domain occupies L170 to I209.

Belongs to the NAC-alpha family. Part of the nascent polypeptide-associated complex (NAC), consisting of EGD2 and EGD1. NAC associates with ribosomes via EGD1.

Its subcellular location is the cytoplasm. The protein resides in the nucleus. In terms of biological role, component of the nascent polypeptide-associated complex (NAC), a dynamic component of the ribosomal exit tunnel, protecting the emerging polypeptides from interaction with other cytoplasmic proteins to ensure appropriate nascent protein targeting. The NAC complex also promotes mitochondrial protein import by enhancing productive ribosome interactions with the outer mitochondrial membrane and blocks the inappropriate interaction of ribosomes translating non-secretory nascent polypeptides with translocation sites in the membrane of the endoplasmic reticulum. EGD2 may also be involved in transcription regulation. The sequence is that of Nascent polypeptide-associated complex subunit alpha (EGD2) from Gibberella zeae (strain ATCC MYA-4620 / CBS 123657 / FGSC 9075 / NRRL 31084 / PH-1) (Wheat head blight fungus).